Reading from the N-terminus, the 396-residue chain is Elongation factor Tu (396 aa).

The region spanning 10 to 206 (KPHLNIGTIG…AVDENVPDPV (197 aa)) is the tr-type G domain. Positions 19–26 (GHVDHGKT) are G1. GTP is bound at residue 19–26 (GHVDHGKT). T26 serves as a coordination point for Mg(2+). The interval 62–66 (GITIN) is G2. Residues 83–86 (DAPG) form a G3 region. GTP is bound by residues 83–87 (DAPGH) and 138–141 (NKSD). The segment at 138 to 141 (NKSD) is G4. Positions 176 to 178 (SAL) are G5.

This sequence belongs to the TRAFAC class translation factor GTPase superfamily. Classic translation factor GTPase family. EF-Tu/EF-1A subfamily. Monomer.

Its subcellular location is the cytoplasm. The catalysed reaction is GTP + H2O = GDP + phosphate + H(+). Functionally, GTP hydrolase that promotes the GTP-dependent binding of aminoacyl-tRNA to the A-site of ribosomes during protein biosynthesis. This Kocuria rhizophila (strain ATCC 9341 / DSM 348 / NBRC 103217 / DC2201) protein is Elongation factor Tu.